The chain runs to 484 residues: Polyamine oxidase 3 (484 aa).

Residues Glu47, Arg55, Val236, and Glu423 each contribute to the FAD site. The Microbody targeting signal motif lies at 482-484 (SRL).

Belongs to the flavin monoamine oxidase family. FAD is required as a cofactor. In terms of tissue distribution, widely expressed.

Its subcellular location is the peroxisome. It catalyses the reaction spermine + O2 + H2O = 3-aminopropanal + spermidine + H2O2. It carries out the reaction N(1)-acetylspermine + O2 + H2O = 3-acetamidopropanal + spermidine + H2O2. The enzyme catalyses norspermine + O2 + H2O = norspermidine + 3-aminopropanal + H2O2. The catalysed reaction is spermidine + O2 + H2O = 3-aminopropanal + putrescine + H2O2. It catalyses the reaction thermospermine + O2 + H2O = 3-aminopropanal + spermidine + H2O2. Its pathway is amine and polyamine degradation; spermine degradation. It participates in amine and polyamine degradation; spermidine degradation. Flavoenzyme involved in polyamine back-conversion. Catalyzes the oxidation of the secondary amino group of polyamines, such as spermine, spermidine and their acetyl derivatives. Substrate preference is spermidine &gt; norspermine &gt; thermospermine &gt; N(1)-acetylspermine &gt; spermine. No activity detected when putrescine is used as substrate. Plays an important role in the regulation of polyamine intracellular concentration. This chain is Polyamine oxidase 3, found in Oryza sativa subsp. japonica (Rice).